The primary structure comprises 793 residues: Probable serine/threonine-protein kinase fnkA (793 aa).

A Protein kinase domain is found at 11 to 358 (WEILSQLGTG…IINLISHNFI (348 aa)). ATP contacts are provided by residues 17–25 (LGTGAFGRV) and Lys-46. The active-site Proton acceptor is the Asp-138. FNIP repeat units lie at residues 403–444 (FNQT…FGAR), 470–514 (YNQP…ILGD), 515–557 (YDQK…LGYR), 558–601 (FNKA…LGYC), and 691–733 (FIRP…LGSR).

The protein belongs to the protein kinase superfamily. STE Ser/Thr protein kinase family. Requires Mg(2+) as cofactor.

It catalyses the reaction L-seryl-[protein] + ATP = O-phospho-L-seryl-[protein] + ADP + H(+). The enzyme catalyses L-threonyl-[protein] + ATP = O-phospho-L-threonyl-[protein] + ADP + H(+). This Dictyostelium discoideum (Social amoeba) protein is Probable serine/threonine-protein kinase fnkA.